Consider the following 186-residue polypeptide: Ribosome-recycling factor (186 aa).

Belongs to the RRF family.

It localises to the cytoplasm. In terms of biological role, responsible for the release of ribosomes from messenger RNA at the termination of protein biosynthesis. May increase the efficiency of translation by recycling ribosomes from one round of translation to another. The chain is Ribosome-recycling factor from Wolinella succinogenes (strain ATCC 29543 / DSM 1740 / CCUG 13145 / JCM 31913 / LMG 7466 / NCTC 11488 / FDC 602W) (Vibrio succinogenes).